A 325-amino-acid chain; its full sequence is Ubiquitin thioesterase OTU1 (325 aa).

Residues 7 to 86 form a UBX-like region; it reads RIRSKTGVEN…NVSSISSNPG (80 aa). The OTU domain maps to 123-246; it reads ATRRVTDDDN…GIHYDALSIC (124 aa). Residues 128-134 form a cys-loop region; that stretch reads TDDDNSC. Asp-131 is a catalytic residue. Catalysis depends on Cys-134, which acts as the Nucleophile. Residues 185–195 are variable-loop; the sequence is IQNPKNWGGAI. Residues 235 to 239 form a his-loop region; that stretch reads YDGIH. Ile-238 contacts substrate. Residue His-239 is part of the active site. Residues 265–270 form an S2 site region; sequence KDSLAK. The segment at 292 to 316 adopts a C2H2-type zinc-finger fold; that stretch reads LICLNCNKTLKGEKEAAIHASTTGH. The active site involves His-316.

It localises to the cytoplasm. The enzyme catalyses Thiol-dependent hydrolysis of ester, thioester, amide, peptide and isopeptide bonds formed by the C-terminal Gly of ubiquitin (a 76-residue protein attached to proteins as an intracellular targeting signal).. In terms of biological role, hydrolase that can remove conjugated ubiquitin from proteins and may therefore play an important regulatory role at the level of protein turnover by preventing degradation. This chain is Ubiquitin thioesterase OTU1 (yod1), found in Dictyostelium discoideum (Social amoeba).